Here is a 203-residue protein sequence, read N- to C-terminus: MISRDDITGLILAGGRGSRMGGTDKGLQPLRGVPMAMHTLMRLSAQTGAVLINANRNLAAYESFGVPVVTDSVPDFAGPLAGMLAGLEQCQTGWMVTAPCDSPFLPTDLVQRLAQAIETEDAELAIPVTIDADGRRQTQPVFCLMPASAIDSLVAYLNGGGRKIETWAASHRLVEVPFDDAAAFANINTLDELHMHESEKRAG.

Residues 12–14 (LAG), Lys25, Asn53, Asp71, and Asp101 each bind GTP. Asp101 serves as a coordination point for Mg(2+).

Belongs to the MobA family. In terms of assembly, monomer. The cofactor is Mg(2+).

The protein resides in the cytoplasm. It carries out the reaction Mo-molybdopterin + GTP + H(+) = Mo-molybdopterin guanine dinucleotide + diphosphate. Functionally, transfers a GMP moiety from GTP to Mo-molybdopterin (Mo-MPT) cofactor (Moco or molybdenum cofactor) to form Mo-molybdopterin guanine dinucleotide (Mo-MGD) cofactor. The protein is Molybdenum cofactor guanylyltransferase of Cupriavidus metallidurans (strain ATCC 43123 / DSM 2839 / NBRC 102507 / CH34) (Ralstonia metallidurans).